The chain runs to 157 residues: Probable succinate transporter subunit YjjB (157 aa).

4 helical membrane-spanning segments follow: residues 2–22 (GIIS…IPAV), 55–75 (AGFN…SIGI), 87–107 (IFTV…TAMI), and 129–149 (FLKA…PGLW).

Belongs to the ThrE exporter (TC 2.A.79) family. As to quaternary structure, the transporter is composed of YjjB and YjjP.

Its subcellular location is the cell inner membrane. Involved in succinate export with YjjP. Both proteins are required for export. This chain is Probable succinate transporter subunit YjjB, found in Klebsiella pneumoniae (strain 342).